Reading from the N-terminus, the 232-residue chain is Octanoyltransferase (232 aa).

In terms of domain architecture, BPL/LPL catalytic spans 44–219 (EHTGDELWVV…QLARQFGLVL (176 aa)). Substrate is bound by residues 83 to 90 (RGGQVTYH), 150 to 152 (ALG), and 163 to 165 (GLS). Cys-181 (acyl-thioester intermediate) is an active-site residue.

This sequence belongs to the LipB family.

The protein resides in the cytoplasm. The enzyme catalyses octanoyl-[ACP] + L-lysyl-[protein] = N(6)-octanoyl-L-lysyl-[protein] + holo-[ACP] + H(+). The protein operates within protein modification; protein lipoylation via endogenous pathway; protein N(6)-(lipoyl)lysine from octanoyl-[acyl-carrier-protein]: step 1/2. Functionally, catalyzes the transfer of endogenously produced octanoic acid from octanoyl-acyl-carrier-protein onto the lipoyl domains of lipoate-dependent enzymes. Lipoyl-ACP can also act as a substrate although octanoyl-ACP is likely to be the physiological substrate. This is Octanoyltransferase from Xanthomonas campestris pv. campestris (strain B100).